Reading from the N-terminus, the 131-residue chain is Methylglyoxal synthase (131 aa).

The MGS-like domain occupies 1–131 (MKIALIAHDK…GDLDYRKLRK (131 aa)). Residues H8, K12, 34-37 (TGTT), and 54-55 (SG) each bind substrate. D60 functions as the Proton donor/acceptor in the catalytic mechanism. H87 contributes to the substrate binding site.

It belongs to the methylglyoxal synthase family.

The enzyme catalyses dihydroxyacetone phosphate = methylglyoxal + phosphate. Functionally, catalyzes the formation of methylglyoxal from dihydroxyacetone phosphate. This chain is Methylglyoxal synthase, found in Bacillus cereus (strain ATCC 14579 / DSM 31 / CCUG 7414 / JCM 2152 / NBRC 15305 / NCIMB 9373 / NCTC 2599 / NRRL B-3711).